Reading from the N-terminus, the 787-residue chain is PAN2-PAN3 deadenylation complex subunit pan3 (787 aa).

Residues 1 to 20 form a disordered region; the sequence is MNSGLTPSPSPAVAAAGPAG. Residues 11–20 are compositionally biased toward low complexity; that stretch reads PAVAAAGPAG. The segment at 23–51 adopts a C3H1-type zinc-finger fold; it reads GSKLKFCRYYAKDRTCFYGDECQFLHDDQ. Disordered regions lie at residues 131-162, 179-210, and 226-291; these read EATYPRMQQRMTNSSSSPSLLNDSAKPYAAHD, TMSQRRKTPNPTASEFIPKGGSTSRLSNMSQS, and GGPT…PPST. Composition is skewed to low complexity over residues 143–154 and 200–210; these read NSSSSPSLLNDS and STSRLSNMSQS. The PABPC-interacting motif-2 (PAM-2) motif lies at 185-200; that stretch reads KTPNPTASEFIPKGGS. Polar residues predominate over residues 265 to 290; that stretch reads TPNPANYMVPTSASTPVTNSVSQPPS. Residues 365 to 650 form a pseudokinase domain region; it reads QIDQADMPGV…SVNDIMPMIG (286 aa). ATP is bound by residues Arg422, 471–478, and 545–546; these read DFHAGSET and TK. Positions 651-689 form a coiled coil; sequence ARFYTQLDAAQMRNDVIEEDLAKEVQNGRLFRLLAKLGT. The interval 690-787 is knob domain; that stretch reads INERPEFQKD…ELVAAANGQL (98 aa).

Belongs to the protein kinase superfamily. PAN3 family. As to quaternary structure, homodimer. Forms a heterotrimer with a catalytic subunit pan2 to form the poly(A)-nuclease (PAN) deadenylation complex. Interacts (via PAM-2 motif) with poly(A)-binding protein pabpc1 (via PABC domain), conferring substrate specificity of the enzyme complex. Interacts with the GW182 family proteins tnrc6a, tnrc6b and tnrc6c.

It is found in the cytoplasm. It localises to the P-body. In terms of biological role, regulatory subunit of the poly(A)-nuclease (PAN) deadenylation complex, one of two cytoplasmic mRNA deadenylases involved in general and miRNA-mediated mRNA turnover. PAN specifically shortens poly(A) tails of RNA and the activity is stimulated by poly(A)-binding protein (PABP). PAN deadenylation is followed by rapid degradation of the shortened mRNA tails by the CCR4-NOT complex. Deadenylated mRNAs are then degraded by two alternative mechanisms, namely exosome-mediated 3'-5' exonucleolytic degradation, or deadenylation-dependent mRNA decaping and subsequent 5'-3' exonucleolytic degradation by XRN1. PAN3 acts as a positive regulator for PAN activity, recruiting the catalytic subunit PAN2 to mRNA via its interaction with RNA and PABP, and to miRNA targets via its interaction with GW182 family proteins. In Xenopus tropicalis (Western clawed frog), this protein is PAN2-PAN3 deadenylation complex subunit pan3.